Here is a 203-residue protein sequence, read N- to C-terminus: Secreted phosphoprotein 24 (203 aa).

The signal sequence occupies residues 1–23 (MEQAMLKTLALLVLGMHYWCATG). 2 disulfide bridges follow: cysteine 86/cysteine 96 and cysteine 109/cysteine 127. Serine 90 carries the post-translational modification Phosphoserine. Phosphoserine occurs at positions 137, 138, 162, 165, and 174.

Belongs to the SPP2 family. Phosphorylation sites are present in the extracellular medium.

The protein localises to the secreted. Its function is as follows. Could coordinate an aspect of bone turnover. In Mus musculus (Mouse), this protein is Secreted phosphoprotein 24 (Spp2).